A 66-amino-acid chain; its full sequence is Large ribosomal subunit protein uL29 (66 aa).

This sequence belongs to the universal ribosomal protein uL29 family.

The protein is Large ribosomal subunit protein uL29 of Syntrophobacter fumaroxidans (strain DSM 10017 / MPOB).